The chain runs to 667 residues: High affinity sulfate transporter 1 (667 aa).

The disordered stretch occupies residues 16-38 (ETRSNSSSHRHGGGGGGDDTTSL). Helical transmembrane passes span 106-126 (GDFI…LAYA), 131-151 (LDPW…AFMG), 156-176 (IAIG…SNEI), 185-205 (LRLA…LGVC), 208-228 (GFLI…GAAI), 269-289 (WETI…KYIA), 296-316 (FWVS…FVYI), 350-370 (GAGV…AIAI), 425-445 (VSNI…TPLF), 452-472 (VLAS…AMVL), and 486-506 (GAFF…AVAI). An STAS domain is found at 537 to 660 (QYPKAAQIPG…LTVADAVATY (124 aa)).

Belongs to the SLC26A/SulP transporter (TC 2.A.53) family.

The protein localises to the membrane. Functionally, high-affinity H(+)/sulfate cotransporter that mediates the uptake of sulfate by plant roots from low concentrations of sulfate in the soil solution. This Stylosanthes hamata (Caribbean stylo) protein is High affinity sulfate transporter 1 (ST1).